The following is a 380-amino-acid chain: Cytochrome b (380 aa).

4 consecutive transmembrane segments (helical) span residues 34 to 54 (FGSL…LLAT), 78 to 99 (WLIR…YLHI), 114 to 134 (WNTG…GYVL), and 179 to 199 (FFAL…IHLT). Heme b contacts are provided by His84 and His98. Heme b-binding residues include His183 and His197. Position 202 (His202) interacts with a ubiquinone. The next 4 membrane-spanning stretches (helical) occupy residues 227–247 (LKDI…ALFS), 289–309 (LGGV…PLLH), 321–341 (FSQF…WVGS), and 348–368 (FIII…LLFP).

The protein belongs to the cytochrome b family. In terms of assembly, the cytochrome bc1 complex contains 11 subunits: 3 respiratory subunits (MT-CYB, CYC1 and UQCRFS1), 2 core proteins (UQCRC1 and UQCRC2) and 6 low-molecular weight proteins (UQCRH/QCR6, UQCRB/QCR7, UQCRQ/QCR8, UQCR10/QCR9, UQCR11/QCR10 and a cleavage product of UQCRFS1). This cytochrome bc1 complex then forms a dimer. Heme b serves as cofactor.

It is found in the mitochondrion inner membrane. Component of the ubiquinol-cytochrome c reductase complex (complex III or cytochrome b-c1 complex) that is part of the mitochondrial respiratory chain. The b-c1 complex mediates electron transfer from ubiquinol to cytochrome c. Contributes to the generation of a proton gradient across the mitochondrial membrane that is then used for ATP synthesis. In Alle alle (Dovekie), this protein is Cytochrome b (MT-CYB).